The following is a 460-amino-acid chain: Omega-3 fatty acid desaturase, chloroplastic (460 aa).

A Histidine box-1 motif is present at residues 177–181 (HDCGH). Positions 213–217 (HRTHH) match the Histidine box-2 motif. The Histidine box-3 motif lies at 380–384 (HVIHH).

Belongs to the fatty acid desaturase type 1 family.

The protein resides in the plastid. Its subcellular location is the chloroplast membrane. The protein operates within lipid metabolism; polyunsaturated fatty acid biosynthesis. Its function is as follows. Chloroplast omega-3 fatty acid desaturase introduces the third double bond in the biosynthesis of 16:3 and 18:3 fatty acids, important constituents of plant membranes. It is thought to use ferredoxin as an electron donor and to act on fatty acids esterified to galactolipids, sulfolipids and phosphatidylglycerol. The chain is Omega-3 fatty acid desaturase, chloroplastic (FAD7A-1) from Ricinus communis (Castor bean).